The sequence spans 844 residues: Janus kinase and microtubule-interacting protein 3 (844 aa).

Residues S8–R258 adopt a coiled-coil conformation. The tract at residues L250–K290 is disordered. The span at R254–P268 shows a compositional bias: basic and acidic residues. Residues H269–S282 show a composition bias toward low complexity. Residues E289–A421 are a coiled coil. S384 carries the phosphoserine modification. Positions S466 to C483 are enriched in polar residues. Positions S466–L489 are disordered. Coiled-coil stretches lie at residues M493–K621 and V683–L834.

The protein belongs to the JAKMIP family. As to expression, specifically expressed in the CNS and endocrine tissues. Also detected in other tissues including heart, testis and prostate.

The protein resides in the golgi apparatus. The protein is Janus kinase and microtubule-interacting protein 3 (JAKMIP3) of Homo sapiens (Human).